A 456-amino-acid polypeptide reads, in one-letter code: 26S proteasome non-ATPase regulatory subunit 12 (456 aa).

Ala2 is modified (N-acetylalanine). Residue Lys92 forms a Glycyl lysine isopeptide (Lys-Gly) (interchain with G-Cter in SUMO1); alternate linkage. A Glycyl lysine isopeptide (Lys-Gly) (interchain with G-Cter in SUMO2); alternate cross-link involves residue Lys92. N6-acetyllysine occurs at positions 221 and 368. One can recognise a PCI domain in the interval 242-420; sequence SICKHYRAIY…GIINFQRPKD (179 aa).

This sequence belongs to the proteasome subunit p55 family. In terms of assembly, component of the 19S proteasome regulatory particle complex. The 26S proteasome consists of a 20S core particle (CP) and two 19S regulatory subunits (RP). The regulatory particle is made of a lid composed of 9 subunits including PSMD12, a base containing 6 ATPases and few additional components. Interacts with ERCC6.

Component of the 26S proteasome, a multiprotein complex involved in the ATP-dependent degradation of ubiquitinated proteins. This complex plays a key role in the maintenance of protein homeostasis by removing misfolded or damaged proteins, which could impair cellular functions, and by removing proteins whose functions are no longer required. Therefore, the proteasome participates in numerous cellular processes, including cell cycle progression, apoptosis, or DNA damage repair. The sequence is that of 26S proteasome non-ATPase regulatory subunit 12 (PSMD12) from Pongo abelii (Sumatran orangutan).